The following is a 398-amino-acid chain: LIM/homeobox protein Lhx3 (398 aa).

2 LIM zinc-binding domains span residues 28–78 and 87–141; these read CAGC…CKDD and CAAC…CKAD. A DNA-binding region (homeobox) is located at residues 154–213; sequence AKRPRTTITAKQLETLKNAYNNSPKPARHVREQLSTETGLDMRVVQVWFQNRRAKEKRLK. 2 disordered regions span residues 208–294 and 307–398; these read KEKR…FPLE and DIQA…HAQF. Over residues 272-282 the composition is skewed to low complexity; it reads SSLSESSPALS.

It is found in the nucleus. Functionally, transcription factor. This is LIM/homeobox protein Lhx3 (lhx3) from Danio rerio (Zebrafish).